Reading from the N-terminus, the 1473-residue chain is DNA topoisomerase 2 (1473 aa).

The disordered stretch occupies residues 1–20 (MATKLPLQNSNAANVAKAPA). The span at 9 to 20 (NSNAANVAKAPA) shows a compositional bias: low complexity. ATP-binding positions include Asn91, Asn120, 148-150 (SSN), and 161-168 (GRNGYGAK). Residues 345–347 (NKK) form an interaction with DNA region. 378-380 (QTK) is an ATP binding site. A Toprim domain is found at 455–569 (CTLILTEGDS…SLLQVPSFLV (115 aa)). 3 residues coordinate Mg(2+): Glu461, Asp538, and Asp540. Positions 704 to 1163 (IPSMVDGLKP…TPKSLWLSDL (460 aa)) constitute a Topo IIA-type catalytic domain. Tyr794 functions as the O-(5'-phospho-DNA)-tyrosine intermediate in the catalytic mechanism. An interaction with DNA region spans residues 980 to 989 (KLTTTIATSN). Disordered stretches follow at residues 1195–1230 (SGAAVKVKRQAPKKPAPKKTTKKASESETTEASYSA), 1242–1297 (KPKA…EVEE), and 1313–1473 (GSAP…EDDE). 2 stretches are compositionally biased toward basic residues: residues 1200–1216 (KVKRQAPKKPAPKKTTK) and 1278–1288 (PKGRQGAKKKA). Over residues 1351-1360 (KPAATKAAKP) the composition is skewed to low complexity. Polar residues-rich tracts occupy residues 1394 to 1404 (SPFNKKSSSVM) and 1417 to 1427 (ENVAGNSSSEK). Over residues 1453 to 1473 (SESESANDSEFDDIEDDEDDE) the composition is skewed to acidic residues.

It belongs to the type II topoisomerase family. In terms of assembly, homodimer. Mg(2+) is required as a cofactor. Requires Mn(2+) as cofactor. The cofactor is Ca(2+).

The enzyme catalyses ATP-dependent breakage, passage and rejoining of double-stranded DNA.. Control of topological states of DNA by transient breakage and subsequent rejoining of DNA strands. Topoisomerase II makes double-strand breaks. This Arabidopsis thaliana (Mouse-ear cress) protein is DNA topoisomerase 2 (TOP2).